The chain runs to 560 residues: MSETINTAAQFPSFEKPTVQFNEKGWGPCELPDTFKDVPYQPFSKNDRLGKICDWTNTSNNDKKYQNKYASSFGTGNQYSYYHEEDETTFHLVDTARVQKPPHQRGRFRNMRNSRSGRGRNARGGLNTHGMTTLSGKNVKARDPRHGRGMGKKFGHRGPPPKMRESSVAVRADWASIEEMDFPRLIKLSLPNIKEGVDIVTCGTLEYYDKTYDRINVKNEKPLQKIDRIVHTVTTTDDPVIRRLSKTVGNVFATDAILATIMCSTRSNYSWDIVIEKVGDKIFMDKRDHTEFDLLTVNESSVEPPTDDDSSCNSPRNLAIEATFINHNFSQQVLKTGDQEPKYKFEESNPFISEDEDIQVASVGYRYKKWELGSDIVLVARCEHDGVLQTPSGDSQFMTIKALNEWDSKLANGVEWRQKLDTQRGAVLANELRNNACKLAKWTVQAVLAGSDQLKLGYVSRINPRDHSRHVILGTQQFKPHEFATQINLSMDNAWGILRCIIDLVMKQKDGKYLIMKDPNKPIIRLYDIPDNTFDSDDSDDGEGDDEGFQQVYNYAHNKI.

Residues 98–166 form a disordered region; sequence VQKPPHQRGR…RGPPPKMRES (69 aa). Residues 100–121 show a composition bias toward basic residues; sequence KPPHQRGRFRNMRNSRSGRGRN. Residue threonine 128 is modified to Phosphothreonine. Basic residues predominate over residues 147–156; sequence GRGMGKKFGH. The segment at 291-305 is RNA gate; it reads EFDLLTVNESSVEPP.

It belongs to the eIF-3 subunit D family. In terms of assembly, component of the eukaryotic translation initiation factor 3 (eIF-3) complex. The eIF-3 complex interacts with pix.

It is found in the cytoplasm. In terms of biological role, mRNA cap-binding component of the eukaryotic translation initiation factor 3 (eIF-3) complex, which is involved in protein synthesis of a specialized repertoire of mRNAs and, together with other initiation factors, stimulates binding of mRNA and methionyl-tRNAi to the 40S ribosome. The eIF-3 complex specifically targets and initiates translation of a subset of mRNAs involved in cell proliferation. In the eIF-3 complex, eif3d specifically recognizes and binds the 7-methylguanosine cap of a subset of mRNAs. In Drosophila yakuba (Fruit fly), this protein is Eukaryotic translation initiation factor 3 subunit D-1.